Reading from the N-terminus, the 355-residue chain is Peptide chain release factor 1 (355 aa).

An N5-methylglutamine modification is found at glutamine 233.

Belongs to the prokaryotic/mitochondrial release factor family. Methylated by PrmC. Methylation increases the termination efficiency of RF1.

The protein resides in the cytoplasm. Its function is as follows. Peptide chain release factor 1 directs the termination of translation in response to the peptide chain termination codons UAG and UAA. The protein is Peptide chain release factor 1 of Syntrophomonas wolfei subsp. wolfei (strain DSM 2245B / Goettingen).